The following is a 782-amino-acid chain: Hypersensitive to pore-forming toxin protein 40 (782 aa).

The Tudor; degenerate domain maps to 138–203; it reads ESEIVPGAMY…TLFVSDQFSI (66 aa). Composition is skewed to polar residues over residues 332–346 and 413–443; these read SVNP…SSSM and FEST…STIQ. Disordered regions lie at residues 332–351, 413–448, 472–492, and 617–672; these read SVNP…DCPY, FEST…NEED, IERP…NMSE, and VAQG…LEDP. The segment covering 617–634 has biased composition (polar residues); it reads VAQGSNAPKTAPNDSVNS. Residues 638-662 show a composition bias toward basic and acidic residues; the sequence is DDIHETDKRGNHCKSVTEDPKDNKD.

It localises to the cytoplasm. Its subcellular location is the perinuclear region. The polypeptide is Hypersensitive to pore-forming toxin protein 40 (Caenorhabditis elegans).